We begin with the raw amino-acid sequence, 171 residues long: Ribosome maturation factor RimM (171 aa).

The 74-residue stretch at 97 to 170 folds into the PRC barrel domain; it reads EGEYYYHEII…LVTIHVMEGL (74 aa).

This sequence belongs to the RimM family. In terms of assembly, binds ribosomal protein uS19.

It localises to the cytoplasm. Functionally, an accessory protein needed during the final step in the assembly of 30S ribosomal subunit, possibly for assembly of the head region. Essential for efficient processing of 16S rRNA. May be needed both before and after RbfA during the maturation of 16S rRNA. It has affinity for free ribosomal 30S subunits but not for 70S ribosomes. This Bacillus cereus (strain ATCC 14579 / DSM 31 / CCUG 7414 / JCM 2152 / NBRC 15305 / NCIMB 9373 / NCTC 2599 / NRRL B-3711) protein is Ribosome maturation factor RimM.